The following is a 1923-amino-acid chain: MKSPALQPLSMAGLQLMTPASSPMGPFFGLPWQQEAIHDNIYTPRKYQVELLEAALDHNTIVCLNTGSGKTFIAVLLTKELSYQIRGDFNRNGKRTVFLVNSANQVAQQVSAVRTHSDLKVGEYSNLEVSASWTKEKWNQEFTKHQVLIMTCYVALNVLKNGYLSLSDINLLVFDECHLAILDHPYREIMKLCENCPSCPRILGLTASILNGKCDPEELEEKIQKLEKILKSNAETATDLVVLDRYTSQPCEIVVDCGPFTDRSGLYERLLMELEEALNFINDCNISVHSKERDSTLISKQILSDCRAVLVVLGPWCADKVAGMMVRELQKHIKHEQEELHRKFLLFTDTFLRKIHALCEEHFSPASLDLKFVTPKVIKLLEILRKYKPYERQQFESVEWYNNRNQDNYVSWSDSEDDEEDEEIEEKEKPETNFPSPFTNILCGIIFVERRYTAVVLNRLIKEAGKQDPELAYISSNFITGHGIGKNQPRNKQMEAEFRKQEEVLRKFRAHETNLLIATSIVEEGVDIPKCNLVVRFDLPTEYRSYVQSKGRARAPISNYVMLADTDKIKSFEEDLKTYKAIEKILRNKCSKSVDTGEADTEPVVDDDDVFPPYVLRPEDGPRVTINTAIGHVNRYCARLPSDPFTHLAPKCRTRELPDGTFYSTLYLPINSPLRASIVGPPMSCIRLAERVVALICCEKLHKIGELDDHLMPVGKETVKYEEELDLHDEEETSVPGRPGSTKRRQCYPKAIPECLRESYPRPGQPCYLYVIGMVLTTPLPDELNFRRRKLYPPEDTTRCFGILTAKPIPQIPHFPVYTRSGEVTISIELKKSGFTLSLQMLELITRLHQYIFSHILRLEKPALEFKPTDADSAYCVLPLNVVNDSSTLDIDFKFMEDIEKSEARIGIPSTKYSKETPFVFKLEDYQDAVIIPRYRNFDQPHRFYVADVYTDLTPLSKFPSPEYETFAEYYKTKYNLDLTNLNQPLLDVDHTSSRLNLLTPRHLNQKGKALPLSSAEKRKAKWESLQNKQILVPELCAIHPIPASLWRKAVCLPSILYRLHCLLTAEELRAQTASDAGVGVRSLPVDFRYPNLDFGWKKSIDSKSFISIANSSSAENENYCKHSTIVVPENAAHQGANRTSPLENHDQMSVNCRTLFSESPGKLQIEVSTDLTAINGLSYNKSLANGSYDLANRDFCQGNHLNYYKQEIPVQPTTSYPIQNLYNYENQPKPSDECTLLSNKYLDGNANTSTSDGSPVTAAVPGTTETGEAPPDRTASEQSPSPGYSSRTLGPNPGLILQALTLSNASDGFNLERLEMLGDSFLKHAITTVSLSALILDAHEGRLSYMRSKKVSNCNLYRLGKKKGLPSRMVVSIFDPPVNGLPPGYVVNQDKSNTEKWEKDEMTKDCMLANGKLDDDFEEEEEEEEDLMWRAHKEDADDEDDFLEYDQEHIKFIDNMLMGSGAFVKKISLSPFSATDSAYEWKMPKKSSLGSLPFSSDFEDFDYSSWDAMCYLDPSKAVEEDDFVVGFWNPSEENCGVDTGKQSISYDLHTEQCIADKSIADCVEALLGCYLTSCGERAAQLFLCSLGLKVLPVIKRTDREKAMCPTRENFTSQQKNLSGSRAAASGAGYRASVLKDLEYGCLKIPPRCMFDHPEADRTLRHLISGFENFEKKINYRFKNKAYLLQAFTHASYHYNTITDCYQRLEFLGDAILDYLITKHLYEDPRQHSPGVLTDLRSALVNNTIFASLAVKYDYHKYFKAVSPELFHVIDDFVQFQLEKNEMQGMDSELRRSEEDEEKEEDIEVPKAMGDIFESLAGAIYMDSGMSLETVWQVYYPMMRPLIEKFSANVPRSPVRELLEMEPEITKFSPAERTYDGKVRVTVEVVGKGKFKGVGRSYRIAKSAAARRALRSLKANQPQVPNS.

The 177-residue stretch at 51–227 (LLEAALDHNT…ELEEKIQKLE (177 aa)) folds into the Helicase ATP-binding domain. 64–71 (LNTGSGKT) is a binding site for ATP. The short motif at 175-178 (DECH) is the DECH box element. Residues 256–595 (DCGPFTDRSG…LRNKCSKSVD (340 aa)) are required for interaction with PRKRA and TARBP2. A disordered region spans residues 410-433 (VSWSDSEDDEEDEEIEEKEKPETN). Phosphoserine occurs at positions 413 and 415. Residues 414 to 425 (DSEDDEEDEEIE) are compositionally biased toward acidic residues. The region spanning 433–602 (NFPSPFTNIL…SVDTGEADTE (170 aa)) is the Helicase C-terminal domain. One can recognise a Dicer dsRNA-binding fold domain in the interval 629-721 (AIGHVNRYCA…MPVGKETVKY (93 aa)). The region spanning 894 to 1041 (KFMEDIEKSE…LVPELCAIHP (148 aa)) is the PAZ domain. Phosphoserine is present on residues Ser1015 and Ser1160. Polar residues-rich tracts occupy residues 1246–1255 (NANTSTSDGS) and 1277–1290 (SEQS…SRTL). The disordered stretch occupies residues 1246-1291 (NANTSTSDGSPVTAAVPGTTETGEAPPDRTASEQSPSPGYSSRTLG). Positions 1276 to 1404 (ASEQSPSPGY…TEKWEKDEMT (129 aa)) constitute an RNase III 1 domain. Mg(2+)-binding residues include Glu1316, Glu1396, and Glu1399. Phosphoserine is present on residues Ser1461, Ser1469, and Ser1471. An RNase III 2 domain is found at 1667–1825 (FENFEKKINY…LAGAIYMDSG (159 aa)). 3 residues coordinate Mg(2+): Glu1706, Asp1811, and Glu1814. Residues 1853 to 1915 (SPVRELLEME…ARRALRSLKA (63 aa)) enclose the DRBM domain. Ser1869 bears the Phosphoserine mark.

Belongs to the helicase family. Dicer subfamily. As to quaternary structure, component of the RISC loading complex (RLC), or micro-RNA (miRNA) loading complex (miRLC), which is composed of DICER1, AGO2 and TARBP2; DICER1 and TARBP2 are required to process precursor miRNAs (pre-miRNAs) to mature miRNAs and then load them onto AGO2. Note that the trimeric RLC/miRLC is also referred to as RISC. Interacts with DHX9, AGO1, PIWIL1 and PRKRA. Interacts with AGO2, TARBP2, EIF6, MOV10 and RPL7A (60S ribosome subunit); they form a large RNA-induced silencing complex (RISC). Interacts with BCDIN3D. Interacts (via Dicer dsRNA-binding fold domain) with ALOX5 (via PLAT domain); this interaction enhances arachidonate 5-lipoxygenase activity and modifies the miRNA precursor processing activity of DICER1. The cofactor is Mg(2+). Mn(2+) is required as a cofactor.

It is found in the cytoplasm. It carries out the reaction Endonucleolytic cleavage to 5'-phosphomonoester.. In terms of biological role, double-stranded RNA (dsRNA) endoribonuclease playing a central role in short dsRNA-mediated post-transcriptional gene silencing. Cleaves naturally occurring long dsRNAs and short hairpin pre-microRNAs (miRNA) into fragments of twenty-one to twenty-three nucleotides with 3' overhang of two nucleotides, producing respectively short interfering RNAs (siRNA) and mature microRNAs. SiRNAs and miRNAs serve as guide to direct the RNA-induced silencing complex (RISC) to complementary RNAs to degrade them or prevent their translation. Gene silencing mediated by siRNAs, also called RNA interference, controls the elimination of transcripts from mobile and repetitive DNA elements of the genome but also the degradation of exogenous RNA of viral origin for instance. The miRNA pathway on the other side is a mean to specifically regulate the expression of target genes. This chain is Endoribonuclease Dicer (DICER1), found in Bos taurus (Bovine).